An 85-amino-acid polypeptide reads, in one-letter code: Toxin BmKaTX15 (85 aa).

Positions 1 to 19 (MNYLVFFSLALLVMTGVES) are cleaved as a signal peptide. In terms of domain architecture, LCN-type CS-alpha/beta spans 21–83 (RDGYIADDKN…VPIRVPGKCN (63 aa)). 4 cysteine pairs are disulfide-bonded: Cys31-Cys82, Cys35-Cys55, Cys41-Cys65, and Cys45-Cys67.

It belongs to the long (4 C-C) scorpion toxin superfamily. Sodium channel inhibitor family. Alpha subfamily. Expressed by the venom gland.

It localises to the secreted. Functionally, alpha toxins bind voltage-independently at site-3 of sodium channels (Nav) and inhibit the inactivation of the activated channels, thereby blocking neuronal transmission. The sequence is that of Toxin BmKaTX15 from Olivierus martensii (Manchurian scorpion).